Consider the following 215-residue polypeptide: Peptide methionine sulfoxide reductase MsrA (215 aa).

C58 is an active-site residue.

It belongs to the MsrA Met sulfoxide reductase family.

The enzyme catalyses L-methionyl-[protein] + [thioredoxin]-disulfide + H2O = L-methionyl-(S)-S-oxide-[protein] + [thioredoxin]-dithiol. The catalysed reaction is [thioredoxin]-disulfide + L-methionine + H2O = L-methionine (S)-S-oxide + [thioredoxin]-dithiol. In terms of biological role, has an important function as a repair enzyme for proteins that have been inactivated by oxidation. Catalyzes the reversible oxidation-reduction of methionine sulfoxide in proteins to methionine. In Pseudomonas aeruginosa (strain UCBPP-PA14), this protein is Peptide methionine sulfoxide reductase MsrA.